The sequence spans 427 residues: UPF0761 membrane protein Plut_1323 (427 aa).

6 consecutive transmembrane segments (helical) span residues 51-71 (LLSI…FAVF), 105-125 (TFTM…VLIS), 147-167 (FTLY…SLAA), 188-208 (LLSL…YLLV), 221-241 (GALV…FYVA), and 251-271 (GALS…VVVL).

It belongs to the UPF0761 family.

It localises to the cell inner membrane. This is UPF0761 membrane protein Plut_1323 from Chlorobium luteolum (strain DSM 273 / BCRC 81028 / 2530) (Pelodictyon luteolum).